We begin with the raw amino-acid sequence, 808 residues long: Transducin beta-like protein 3 (808 aa).

Position 2 is an N-acetylalanine (alanine 2). WD repeat units follow at residues 64-105 (EDQE…RLWK), 107-146 (IHTAPVATMAFDPTSTLLATGGCDGAVRVWDIVRHYGTHH), 149-190 (GSPG…CLAV), 193-232 (AHYSAVTSLAFSADGHTMLSSGRDKICIIWDLQSCQATRT), 245-284 (LPEEPVSQLGVKSPGLYFLTAGDQGTLRVWEAASGQCVYT), 290-329 (GPGQELTHCTLAHTAGVVLTATADHNLLLYEARSLRLQKQ), 332-372 (GYSE…CQIL), 374-413 (GHTDIVLALDVFRKGWLFASCAKDQSVRIWRMNKAGQVMC), 419-459 (GHTH…LSKN), 477-516 (CHDKDINSVAIAPNDKLLATGSQDRTAKLWALPQCQLLGV), 519-560 (GHRR…KTFE), 562-602 (HDAS…RTLD), and 604-642 (HEDKVWGLHCSRLDDHALTGASDSRVILWKDVTEAEQAE). Residue serine 257 is modified to Phosphoserine. Lysine 407 is covalently cross-linked (Glycyl lysine isopeptide (Lys-Gly) (interchain with G-Cter in SUMO2)).

As to quaternary structure, part of the small subunit (SSU) processome, composed of more than 70 proteins and the RNA chaperone small nucleolar RNA (snoRNA) U3.

It localises to the nucleus. Its subcellular location is the nucleolus. Functionally, part of the small subunit (SSU) processome, first precursor of the small eukaryotic ribosomal subunit. During the assembly of the SSU processome in the nucleolus, many ribosome biogenesis factors, an RNA chaperone and ribosomal proteins associate with the nascent pre-rRNA and work in concert to generate RNA folding, modifications, rearrangements and cleavage as well as targeted degradation of pre-ribosomal RNA by the RNA exosome. The protein is Transducin beta-like protein 3 of Homo sapiens (Human).